The primary structure comprises 463 residues: Ribosomal protein uS12 methylthiotransferase RimO (463 aa).

Residues 1-26 (MPAMSQNPPLLRPDLAPAPIFDTSRR) form a disordered region. Over residues 8–19 (PPLLRPDLAPAP) the composition is skewed to low complexity. Positions 30 to 140 (PTIGMVSLGC…VLDAVHHAVP (111 aa)) constitute an MTTase N-terminal domain. 6 residues coordinate [4Fe-4S] cluster: cysteine 39, cysteine 75, cysteine 104, cysteine 171, cysteine 175, and cysteine 178. The Radical SAM core domain maps to 157–395 (LTPRHYSYLK…MQKAQAISEA (239 aa)). The region spanning 398 to 463 (AAKVGHRIEV…AGEYDLWGRL (66 aa)) is the TRAM domain.

It belongs to the methylthiotransferase family. RimO subfamily. It depends on [4Fe-4S] cluster as a cofactor.

Its subcellular location is the cytoplasm. The enzyme catalyses L-aspartate(89)-[ribosomal protein uS12]-hydrogen + (sulfur carrier)-SH + AH2 + 2 S-adenosyl-L-methionine = 3-methylsulfanyl-L-aspartate(89)-[ribosomal protein uS12]-hydrogen + (sulfur carrier)-H + 5'-deoxyadenosine + L-methionine + A + S-adenosyl-L-homocysteine + 2 H(+). Catalyzes the methylthiolation of an aspartic acid residue of ribosomal protein uS12. This chain is Ribosomal protein uS12 methylthiotransferase RimO, found in Paracoccus denitrificans (strain Pd 1222).